Reading from the N-terminus, the 474-residue chain is MKSVVRSKGTQALFRRFSSALGDSINPNQVGVGDNVIRVNGRLFEVDKVQEKGLKTSVLDNGTKVITLDNGGSVAQLTFLYKDGPVYENIFNAGISSFMKHALTKDGLTSSEYITKTFLQKAGIIVHEPTVVNKSAIAFTVEGFRDTLAQPAVADKFWQSLLFPRFSPENVKEVKRLVELESKETKRDSPFAYLQDILHKTAFKGSPLGHTSFVPAYNLGYIDSNKLFDRWDAHYGFGNIAVIATNIEHEAVLAAITDSAWVARAHNKVGGVAAPASKYSGGEGYDVVHRAKEFDDQFTDVYSTYTAYAFKAPGRSNLKEHAASLVIAQALSNAVSPVLNTSFAPKRLEVFYQAYDTVGLIGLSSVQASNAQLKAFKAALSKIGTLSEADLAVHKSAALLTAYGNVESWRATQATLIDSFNTTGQPLSPLEIVSAIKAVSADTVKSVVATMLGSPATLVHHGDSPCAPTLDALQ.

Residues 1-42 constitute a mitochondrion transit peptide; it reads MKSVVRSKGTQALFRRFSSALGDSINPNQVGVGDNVIRVNGR.

This sequence belongs to the peptidase M16 family. UQCRC2/QCR2 subfamily. As to quaternary structure, component of the ubiquinol-cytochrome c oxidoreductase (cytochrome b-c1 complex, complex III, CIII), a multisubunit enzyme composed of 3 respiratory subunits cytochrome b, cytochrome c1 and Rieske protein, 2 core protein subunits, and additional low-molecular weight protein subunits. The complex exists as an obligatory dimer and forms supercomplexes (SCs) in the inner mitochondrial membrane with cytochrome c oxidase (complex IV, CIV).

The protein resides in the mitochondrion inner membrane. Its function is as follows. Component of the ubiquinol-cytochrome c oxidoreductase, a multisubunit transmembrane complex that is part of the mitochondrial electron transport chain which drives oxidative phosphorylation. The respiratory chain contains 3 multisubunit complexes succinate dehydrogenase (complex II, CII), ubiquinol-cytochrome c oxidoreductase (cytochrome b-c1 complex, complex III, CIII) and cytochrome c oxidase (complex IV, CIV), that cooperate to transfer electrons derived from NADH and succinate to molecular oxygen, creating an electrochemical gradient over the inner membrane that drives transmembrane transport and the ATP synthase. The cytochrome b-c1 complex catalyzes electron transfer from ubiquinol to cytochrome c, linking this redox reaction to translocation of protons across the mitochondrial inner membrane, with protons being carried across the membrane as hydrogens on the quinol. In the process called Q cycle, 2 protons are consumed from the matrix, 4 protons are released into the intermembrane space and 2 electrons are passed to cytochrome c. This chain is Ubiquinol-cytochrome-c reductase complex core protein 2, mitochondrial, found in Euglena gracilis.